The chain runs to 421 residues: Testin (421 aa).

In terms of domain architecture, PET spans 92 to 199 (MILTNPVAAK…GDVKLPCEMD (108 aa)). 3 LIM zinc-binding domains span residues 234 to 297 (YSCY…CDSE), 299 to 359 (PRCA…NHAV), and 362 to 421 (QGCH…KRMS).

It belongs to the prickle / espinas / testin family. As to quaternary structure, interacts via LIM domain 1 with ZYX. Interacts (via LIM domain 3) with ENAH and VASP. Interacts with ALKBH4, talin, actin, alpha-actinin, GRIP1 and PXN. Interacts (via LIM domain 2) with ACTL7A (via N-terminus). Heterodimer with ACTL7A; the heterodimer interacts with ENAH to form a heterotrimer.

It is found in the cytoplasm. The protein resides in the cell junction. Its subcellular location is the focal adhesion. Its function is as follows. Scaffold protein that may play a role in cell adhesion, cell spreading and in the reorganization of the actin cytoskeleton. Plays a role in the regulation of cell proliferation. May act as a tumor suppressor. The chain is Testin (TES) from Nomascus leucogenys (Northern white-cheeked gibbon).